A 48-amino-acid polypeptide reads, in one-letter code: Small polypeptide DEVIL 14 (48 aa).

The chain crosses the membrane as a helical span at residues 4–23 (TVVLRCCTSVTKVRTWKRCS). The segment at 17–48 (RTWKRCSKQIKEQRARLYIIWKCAVFLLSSHD) is required for DVL/RTFL small polypeptide activity.

This sequence belongs to the DVL/RTFL small polypeptides family.

The protein resides in the cell membrane. Functionally, small polypeptide acting as a regulatory molecule which coordinates cellular responses required for differentiation, growth and development, probably by restricting polar cell proliferation in lateral organs and coordinating socket cell recruitment and differentiation at trichome sites. This is Small polypeptide DEVIL 14 from Arabidopsis thaliana (Mouse-ear cress).